The chain runs to 183 residues: Ly6/PLAUR domain-containing protein 6B (183 aa).

Positions methionine 1 to alanine 39 are cleaved as a signal peptide. A UPAR/Ly6 domain is found at phenylalanine 60–alanine 151. The interval phenylalanine 60 to alanine 154 is sufficient for inhibiting alpha-7 nAChR currents. 6 disulfides stabilise this stretch: cysteine 62–cysteine 90, cysteine 65–cysteine 74, cysteine 83–cysteine 109, cysteine 115–cysteine 134, cysteine 120–cysteine 131, and cysteine 135–cysteine 140. Serine 164 carries the GPI-anchor amidated serine lipid modification. Residues serine 165–leucine 183 constitute a propeptide, removed in mature form.

The protein resides in the cell membrane. Its function is as follows. Likely acts as a modulator of nicotinic acetylcholine receptors (nAChRs) activity. In vitro acts on nAChRs in a subtype- and stoichiometry-dependent manner. Modulates specifically alpha-3(3):beta-4(2) nAChRs by enhancing the sensitivity to ACh, decreasing ACh-induced maximal current response and increasing the rate of desensitization to ACh; has no effect on alpha-7 homomeric nAChRs; modulates alpha-3(2):alpha-5:beta-4(2) nAChRs in the context of CHRNA5/alpha-5 variant Asn-398 but not its wild-type sequence. However, according to another report in vitro it can weakly inhibits alpha-7 nAChRs. This Homo sapiens (Human) protein is Ly6/PLAUR domain-containing protein 6B (LYPD6B).